A 158-amino-acid chain; its full sequence is Transcription antitermination protein NusB (158 aa).

Basic and acidic residues predominate over residues 1–12 (MKRVEKRAEKQG). The interval 1–20 (MKRVEKRAEKQGRGTARKSR) is disordered.

Belongs to the NusB family.

Involved in transcription antitermination. Required for transcription of ribosomal RNA (rRNA) genes. Binds specifically to the boxA antiterminator sequence of the ribosomal RNA (rrn) operons. This is Transcription antitermination protein NusB from Nitrosospira multiformis (strain ATCC 25196 / NCIMB 11849 / C 71).